A 287-amino-acid chain; its full sequence is Pol-RFamide neuropeptides (287 aa).

The first 21 residues, 1 to 21 (MNLITLLVLGVSTCLIYGIEA), serve as a signal peptide directing secretion. The propeptide occupies 22 to 52 (DEKTSSALENEIVEILNGNFKNEKKSIETSD). Pyrrolidone carboxylic acid is present on Q53. Residue F59 is modified to Phenylalanine amide. Residues 62–64 (EVN) constitute a propeptide that is removed on maturation. Q65 is modified (pyrrolidone carboxylic acid). Residue F71 is modified to Phenylalanine amide. A propeptide spanning residues 74–77 (ELSD) is cleaved from the precursor. Q78 is modified (pyrrolidone carboxylic acid). Residue F84 is modified to Phenylalanine amide. Positions 87 to 90 (ELSD) are excised as a propeptide. Q91 bears the Pyrrolidone carboxylic acid mark. F97 bears the Phenylalanine amide mark. The propeptide occupies 100 to 103 (EVLD). Position 104 is a pyrrolidone carboxylic acid (Q104). Residue F110 is modified to Phenylalanine amide. A propeptide spanning residues 113–116 (DASN) is cleaved from the precursor. Q117 carries the pyrrolidone carboxylic acid modification. F123 bears the Phenylalanine amide mark. The propeptide occupies 126–129 (ELSD). Q130 bears the Pyrrolidone carboxylic acid mark. F136 bears the Phenylalanine amide mark. The propeptide occupies 139–142 (EGSN). Q143 carries the post-translational modification Pyrrolidone carboxylic acid. A Phenylalanine amide modification is found at F149. The propeptide occupies 152 to 168 (EASKNDLEKQNGRGDSD). A Pyrrolidone carboxylic acid modification is found at Q169. The residue at position 175 (F175) is a Phenylalanine amide. Residues 178–181 (EARK) constitute a propeptide that is removed on maturation. Residue Q182 is modified to Pyrrolidone carboxylic acid. F188 carries the phenylalanine amide modification. The propeptide occupies 192–194 (DMN). Position 195 is a pyrrolidone carboxylic acid (Q195). At H201 the chain carries Histidine amide. Positions 204-207 (ETSD) are excised as a propeptide. Q208 is modified (pyrrolidone carboxylic acid). F214 carries the post-translational modification Phenylalanine amide. Positions 217-220 (QLSD) are excised as a propeptide. Pyrrolidone carboxylic acid is present on Q221. F227 is subject to Phenylalanine amide. A disordered region spans residues 229-267 (REVKNDKNNPFRSRYTGDSTQLQRENNQPIEELRDNTEK). The propeptide occupies 230 to 287 (EVKNDKNNPFRSRYTGDSTQLQRENNQPIEELRDNTEKVSIENKPIMKKTSVKISKTV). The segment covering 238–257 (PFRSRYTGDSTQLQRENNQP) has biased composition (polar residues).

Belongs to the FARP (FMRFamide related peptide) family. Post-translationally, the N-terminal processing sites of the Pol-RFamide peptides are acidic suggesting that cniderian nervous systems may use a variety of unconventional processing procedures.

The protein resides in the secreted. Has direct action on motoneurons, and effect includes transient inhibition followed by prolonged excitation. This chain is Pol-RFamide neuropeptides, found in Polyorchis penicillatus (Hydromedusa).